Here is an 86-residue protein sequence, read N- to C-terminus: MSEEKNTRTVNGRVVSSKMDKTLTVLVERRVKHPLYGKFIRRSTKLHAHDEGNEGREGDWVSIQECRPLSKNKTWRLVKVLERAAS.

This sequence belongs to the universal ribosomal protein uS17 family. As to quaternary structure, part of the 30S ribosomal subunit.

In terms of biological role, one of the primary rRNA binding proteins, it binds specifically to the 5'-end of 16S ribosomal RNA. The sequence is that of Small ribosomal subunit protein uS17 from Halorhodospira halophila (strain DSM 244 / SL1) (Ectothiorhodospira halophila (strain DSM 244 / SL1)).